Consider the following 152-residue polypeptide: Flagellar assembly factor FliW (152 aa).

This sequence belongs to the FliW family. Interacts with translational regulator CsrA and flagellin(s).

The protein localises to the cytoplasm. Acts as an anti-CsrA protein, binds CsrA and prevents it from repressing translation of its target genes, one of which is flagellin. Binds to flagellin and participates in the assembly of the flagellum. The chain is Flagellar assembly factor FliW from Desulfitobacterium hafniense (strain Y51).